The primary structure comprises 841 residues: pre-rRNA 2'-O-ribose RNA methyltransferase FTSJ3 (841 aa).

Residues Gly-56, Trp-58, Asp-76, Asp-92, and Asp-117 each contribute to the S-adenosyl-L-methionine site. The Proton acceptor role is filled by Lys-157. The disordered stretch occupies residues Ile-332–Asn-366. Ser-333, Ser-335, Ser-336, Ser-347, and Ser-356 each carry phosphoserine. Acidic residues predominate over residues Gly-337–Ser-347. Residues Ser-356 to Leu-404 are a coiled coil. A Glycyl lysine isopeptide (Lys-Gly) (interchain with G-Cter in SUMO2) cross-link involves residue Lys-357. Arg-389 is subject to Citrulline. The interval Val-454–Gln-482 is disordered. Residues Asp-456–Glu-474 are compositionally biased toward acidic residues. The residue at position 547 (Ser-547) is a Phosphoserine. Phosphothreonine is present on Thr-567. Lys-573 participates in a covalent cross-link: Glycyl lysine isopeptide (Lys-Gly) (interchain with G-Cter in SUMO2). Ser-578 carries the post-translational modification Phosphoserine. The disordered stretch occupies residues Pro-579 to His-654. Lys-637 is covalently cross-linked (Glycyl lysine isopeptide (Lys-Gly) (interchain with G-Cter in SUMO2)). Ser-638 carries the post-translational modification Phosphoserine. A Glycyl lysine isopeptide (Lys-Gly) (interchain with G-Cter in SUMO2) cross-link involves residue Lys-653. A Phosphoserine modification is found at Ser-670. Residue Lys-672 forms a Glycyl lysine isopeptide (Lys-Gly) (interchain with G-Cter in SUMO2) linkage. Residue Ser-682 is modified to Phosphoserine. Lys-704 participates in a covalent cross-link: Glycyl lysine isopeptide (Lys-Gly) (interchain with G-Cter in SUMO2). The stretch at Ile-733–Glu-771 forms a coiled coil. Arg-777 carries the citrulline modification. Residues Val-805 to Phe-815 are compositionally biased toward basic residues. Residues Val-805 to Lys-841 form a disordered region. A compositionally biased stretch (basic and acidic residues) spans Lys-816–Lys-832.

It belongs to the class I-like SAM-binding methyltransferase superfamily. RNA methyltransferase RlmE family. SPB1 subfamily. As to quaternary structure, interacts with NIP7. In terms of processing, citrullinated by PADI4.

It is found in the nucleus. The protein resides in the nucleolus. It carries out the reaction a ribonucleotide in rRNA + S-adenosyl-L-methionine = a 2'-O-methylribonucleotide in rRNA + S-adenosyl-L-homocysteine + H(+). In terms of biological role, RNA 2'-O-methyltransferase involved in the processing of the 34S pre-rRNA to 18S rRNA and in 40S ribosomal subunit formation. The sequence is that of pre-rRNA 2'-O-ribose RNA methyltransferase FTSJ3 from Pongo abelii (Sumatran orangutan).